Here is a 243-residue protein sequence, read N- to C-terminus: Probable transcriptional regulatory protein Smlt3713 (243 aa).

The protein belongs to the TACO1 family.

The protein resides in the cytoplasm. This chain is Probable transcriptional regulatory protein Smlt3713, found in Stenotrophomonas maltophilia (strain K279a).